The primary structure comprises 257 residues: DNA repair protein RecO (257 aa).

Belongs to the RecO family.

In terms of biological role, involved in DNA repair and RecF pathway recombination. In Streptococcus thermophilus (strain CNRZ 1066), this protein is DNA repair protein RecO.